The primary structure comprises 309 residues: HPr kinase/phosphorylase (309 aa).

Catalysis depends on residues H138 and K159. 153 to 160 (GQSGVGKS) is a binding site for ATP. A Mg(2+)-binding site is contributed by S160. D177 serves as the catalytic Proton acceptor; for phosphorylation activity. Proton donor; for dephosphorylation activity. The segment at 201–210 (LEIRGLGIIN) is important for the catalytic mechanism of both phosphorylation and dephosphorylation. Residue E202 participates in Mg(2+) binding. The active site involves R243. The interval 264 to 269 (PVRPGR) is important for the catalytic mechanism of dephosphorylation.

It belongs to the HPrK/P family. As to quaternary structure, homohexamer. It depends on Mg(2+) as a cofactor.

It carries out the reaction [HPr protein]-L-serine + ATP = [HPr protein]-O-phospho-L-serine + ADP + H(+). The enzyme catalyses [HPr protein]-O-phospho-L-serine + phosphate + H(+) = [HPr protein]-L-serine + diphosphate. In terms of biological role, catalyzes the ATP- as well as the pyrophosphate-dependent phosphorylation of a specific serine residue in HPr, a phosphocarrier protein of the phosphoenolpyruvate-dependent sugar phosphotransferase system (PTS). HprK/P also catalyzes the pyrophosphate-producing, inorganic phosphate-dependent dephosphorylation (phosphorolysis) of seryl-phosphorylated HPr (P-Ser-HPr). The two antagonistic activities of HprK/P are regulated by several intracellular metabolites, which change their concentration in response to the absence or presence of rapidly metabolisable carbon sources (glucose, fructose, etc.) in the growth medium. Also phosphorylates/dephosphorylates the HPr-like catabolite repression protein crh on a specific serine residue. Therefore, by controlling the phosphorylation state of HPr and crh, HPrK/P is a sensor enzyme that plays a major role in the regulation of carbon metabolism and sugar transport: it mediates carbon catabolite repression (CCR), and regulates PTS-catalyzed carbohydrate uptake and inducer exclusion. The sequence is that of HPr kinase/phosphorylase from Bacillus cytotoxicus (strain DSM 22905 / CIP 110041 / 391-98 / NVH 391-98).